A 344-amino-acid chain; its full sequence is MQIVEENLRDNEGEIKLIPETLDDLWHLRFIIEKGDVVFATTKRASQSSDKLRSDKEMVTVRLGIEVEKVEFHRFANRLRVSGKIVAGIEESGYHTLNITVGKELSIIKKWKPEQLERLRRAVEDSNRPEIVMLTIEEGYAVAGVLRQWGVEEIFEERMGYGKGMGDSRKEFFGEVAAKLESFDFKYLIVAGPGFAKNDFLDFLKERYPEMAKNAVVVDVSSVGSRGFIEILKRRVVDKIVGEVRLAEEAEYIDRLLEGIAKGERVAYGLDEVREAHNYRAIEVLLVADEFLLEEREKWDVDGLLREVEESGGKVVIMSTEFEPGKRLMSLGGIAALLRFNVKG.

It belongs to the eukaryotic release factor 1 family. Pelota subfamily. In terms of assembly, monomer. A divalent metal cation serves as cofactor.

It is found in the cytoplasm. In terms of biological role, may function in recognizing stalled ribosomes, interact with stem-loop structures in stalled mRNA molecules, and effect endonucleolytic cleavage of the mRNA. May play a role in the release non-functional ribosomes and degradation of damaged mRNAs. Has endoribonuclease activity. This chain is Protein pelota homolog, found in Archaeoglobus fulgidus (strain ATCC 49558 / DSM 4304 / JCM 9628 / NBRC 100126 / VC-16).